A 586-amino-acid chain; its full sequence is CTP synthase 2 (586 aa).

Positions 300-554 (SIALVGKYTK…LAATGTLNTH (255 aa)) constitute a Glutamine amidotransferase type-1 domain. Catalysis depends on for GATase activity residues Cys399, His526, and Glu528. A phosphoserine mark is found at Ser568, Ser571, and Ser574.

It belongs to the CTP synthase family.

It catalyses the reaction UTP + L-glutamine + ATP + H2O = CTP + L-glutamate + ADP + phosphate + 2 H(+). It participates in pyrimidine metabolism; CTP biosynthesis via de novo pathway; CTP from UDP: step 2/2. Functionally, catalyzes the ATP-dependent amination of UTP to CTP with either L-glutamine or ammonia as the source of nitrogen. Constitutes the rate-limiting enzyme in the synthesis of cytosine nucleotides. The polypeptide is CTP synthase 2 (Ctps2) (Rattus norvegicus (Rat)).